Reading from the N-terminus, the 197-residue chain is Proteasome subunit beta 1 (197 aa).

Positions 1–6 (MNRKTG) are cleaved as a propeptide — removed in mature form; by autocatalysis. T7 acts as the Nucleophile in catalysis.

The protein belongs to the peptidase T1B family. In terms of assembly, the 20S proteasome core is composed of 14 alpha and 14 beta subunits that assemble into four stacked heptameric rings, resulting in a barrel-shaped structure. The two inner rings, each composed of seven catalytic beta subunits, are sandwiched by two outer rings, each composed of seven alpha subunits. The catalytic chamber with the active sites is on the inside of the barrel. Has a gated structure, the ends of the cylinder being occluded by the N-termini of the alpha-subunits. Is capped at one or both ends by the proteasome regulatory ATPase, PAN.

The protein resides in the cytoplasm. It carries out the reaction Cleavage of peptide bonds with very broad specificity.. Its activity is regulated as follows. The formation of the proteasomal ATPase PAN-20S proteasome complex, via the docking of the C-termini of PAN into the intersubunit pockets in the alpha-rings, triggers opening of the gate for substrate entry. Interconversion between the open-gate and close-gate conformations leads to a dynamic regulation of the 20S proteasome proteolysis activity. In terms of biological role, component of the proteasome core, a large protease complex with broad specificity involved in protein degradation. The chain is Proteasome subunit beta 1 from Pyrococcus horikoshii (strain ATCC 700860 / DSM 12428 / JCM 9974 / NBRC 100139 / OT-3).